Consider the following 438-residue polypeptide: tRNA(Ile)-lysidine synthase (438 aa).

Residue 27 to 32 participates in ATP binding; that stretch reads SGGVDS.

This sequence belongs to the tRNA(Ile)-lysidine synthase family.

Its subcellular location is the cytoplasm. The catalysed reaction is cytidine(34) in tRNA(Ile2) + L-lysine + ATP = lysidine(34) in tRNA(Ile2) + AMP + diphosphate + H(+). Functionally, ligates lysine onto the cytidine present at position 34 of the AUA codon-specific tRNA(Ile) that contains the anticodon CAU, in an ATP-dependent manner. Cytidine is converted to lysidine, thus changing the amino acid specificity of the tRNA from methionine to isoleucine. This chain is tRNA(Ile)-lysidine synthase, found in Vibrio parahaemolyticus serotype O3:K6 (strain RIMD 2210633).